The sequence spans 274 residues: Large ribosomal subunit protein uL2 (274 aa).

Disordered regions lie at residues 28-53 (KPYA…TTRH) and 221-274 (RGTA…RTKK). A compositionally biased stretch (low complexity) spans 39–48 (KSGGRNNNGR). The span at 253–274 (KGKKTRKNKRTEHFIVHRRTKK) shows a compositional bias: basic residues.

This sequence belongs to the universal ribosomal protein uL2 family. In terms of assembly, part of the 50S ribosomal subunit. Forms a bridge to the 30S subunit in the 70S ribosome.

Its function is as follows. One of the primary rRNA binding proteins. Required for association of the 30S and 50S subunits to form the 70S ribosome, for tRNA binding and peptide bond formation. It has been suggested to have peptidyltransferase activity; this is somewhat controversial. Makes several contacts with the 16S rRNA in the 70S ribosome. This chain is Large ribosomal subunit protein uL2, found in Proteus mirabilis (strain HI4320).